A 465-amino-acid polypeptide reads, in one-letter code: Fujikurins efflux protein FFUJ_12242 (465 aa).

The disordered stretch occupies residues 1–66; sequence MATNVGGAVD…AAKAHDEGPP (66 aa). The span at 11 to 28 shows a compositional bias: basic and acidic residues; it reads NSRRSISDNRHDPEKPAE. 7 consecutive transmembrane segments (helical) span residues 70-90, 115-135, 142-162, 175-195, 200-220, 231-251, and 274-294; these read TAAW…PGWI, WIPS…GIIF, PLII…SLAK, SAIG…TWFL, AAMG…PIMI, WALR…CLTV, and PAFA…YIPI. N-linked (GlcNAc...) asparagine glycosylation occurs at N310. The next 5 membrane-spanning stretches (helical) occupy residues 314-334, 342-362, 368-388, 404-424, and 430-450; these read YLVA…GYGA, MFII…IPAT, IGYA…VGAL, IVFL…GAIL, and GWVS…AIIL.

It belongs to the major facilitator superfamily. Monocarboxylate porter (TC 2.A.1.13) family.

It localises to the cell membrane. Functionally, efflux pump that may be involved in the secretion of fujikurins. In Gibberella fujikuroi (strain CBS 195.34 / IMI 58289 / NRRL A-6831) (Bakanae and foot rot disease fungus), this protein is Fujikurins efflux protein FFUJ_12242.